The following is a 345-amino-acid chain: Phosphate acyltransferase (345 aa).

It belongs to the PlsX family. In terms of assembly, homodimer. Probably interacts with PlsY.

It localises to the cytoplasm. The enzyme catalyses a fatty acyl-[ACP] + phosphate = an acyl phosphate + holo-[ACP]. It functions in the pathway lipid metabolism; phospholipid metabolism. Catalyzes the reversible formation of acyl-phosphate (acyl-PO(4)) from acyl-[acyl-carrier-protein] (acyl-ACP). This enzyme utilizes acyl-ACP as fatty acyl donor, but not acyl-CoA. In Thermodesulfovibrio yellowstonii (strain ATCC 51303 / DSM 11347 / YP87), this protein is Phosphate acyltransferase.